Reading from the N-terminus, the 213-residue chain is Phosphoribosyl-dephospho-CoA transferase (213 aa).

Catalysis depends on residues Asp135 and Asp137.

This sequence belongs to the MdcG family.

It catalyses the reaction apo-[malonate decarboxylase ACP] + 2'-(5''-triphospho-alpha-D-ribosyl)-3'-dephospho-CoA = holo-[malonate decarboxylase ACP] + diphosphate. Functionally, transfers 2'-(5-triphosphoribosyl)-3'-dephosphocoenzyme-A to the apo-[acyl-carrier-protein] of the malonate decarboxylase to yield holo-[acyl-carrier-protein]. In Xanthomonas campestris pv. campestris (strain ATCC 33913 / DSM 3586 / NCPPB 528 / LMG 568 / P 25), this protein is Phosphoribosyl-dephospho-CoA transferase.